Reading from the N-terminus, the 555-residue chain is Oxygen-dependent choline dehydrogenase (555 aa).

4-33 (DYIIIGAGSAGNVLATRLTEDPDVTVLLLE) serves as a coordination point for FAD. Catalysis depends on His473, which acts as the Proton acceptor.

Belongs to the GMC oxidoreductase family. FAD is required as a cofactor.

It catalyses the reaction choline + A = betaine aldehyde + AH2. The enzyme catalyses betaine aldehyde + NAD(+) + H2O = glycine betaine + NADH + 2 H(+). It functions in the pathway amine and polyamine biosynthesis; betaine biosynthesis via choline pathway; betaine aldehyde from choline (cytochrome c reductase route): step 1/1. In terms of biological role, involved in the biosynthesis of the osmoprotectant glycine betaine. Catalyzes the oxidation of choline to betaine aldehyde and betaine aldehyde to glycine betaine at the same rate. The sequence is that of Oxygen-dependent choline dehydrogenase from Proteus mirabilis (strain HI4320).